A 366-amino-acid polypeptide reads, in one-letter code: MSGSSMGRLFTVTSFGESHGPGIGCVVDGCPPGLALSEADIQLELDRRKPGTSRHVTQRREPDTVEILSGVYEGKTTGTPIALLIRNTDQRSKDYGNIADTFRPGHADYCYWHKYGTRDPRGGGRSSARETAVRVAAGAIAKKWLNEKYGIVIRGHMTQIGEVAIPFKSWEHVGGNPFFSADPDIVPRLEEYMDSIRKSLDSIGARLRVVADNVPVGWGEPVFDRLDADIAYAMMSINAVKGVEIGAGFGCVTQKGSEHGDELTPRGFASNHAGGVLGGISTGQQIDVSIAIKPTSSIAQPRRSINKQGEAVTMETHGRHDPCVGIRATPIAEAMLALVLIDHALRHRAQCGDVRVETPRIAGHIG.

Positions 48 and 54 each coordinate NADP(+). FMN contacts are provided by residues 125–127, 238–239, Gly-278, 293–297, and Arg-319; these read RSS, NA, and KPTSS.

This sequence belongs to the chorismate synthase family. In terms of assembly, homotetramer. FMNH2 serves as cofactor.

It carries out the reaction 5-O-(1-carboxyvinyl)-3-phosphoshikimate = chorismate + phosphate. The protein operates within metabolic intermediate biosynthesis; chorismate biosynthesis; chorismate from D-erythrose 4-phosphate and phosphoenolpyruvate: step 7/7. In terms of biological role, catalyzes the anti-1,4-elimination of the C-3 phosphate and the C-6 proR hydrogen from 5-enolpyruvylshikimate-3-phosphate (EPSP) to yield chorismate, which is the branch point compound that serves as the starting substrate for the three terminal pathways of aromatic amino acid biosynthesis. This reaction introduces a second double bond into the aromatic ring system. The protein is Chorismate synthase of Chromobacterium violaceum (strain ATCC 12472 / DSM 30191 / JCM 1249 / CCUG 213 / NBRC 12614 / NCIMB 9131 / NCTC 9757 / MK).